The chain runs to 470 residues: Aminodeoxychorismate synthase component 1 (470 aa).

The protein belongs to the anthranilate synthase component I family. As to quaternary structure, monomer. Heterodimer consisting of two non-identical subunits: a glutamine amidotransferase subunit (PabA) and a aminodeoxychorismate synthase subunit (PabB). Mg(2+) serves as cofactor.

The catalysed reaction is chorismate + L-glutamine = 4-amino-4-deoxychorismate + L-glutamate. Its pathway is cofactor biosynthesis; tetrahydrofolate biosynthesis; 4-aminobenzoate from chorismate: step 1/2. Part of a heterodimeric complex that catalyzes the two-step biosynthesis of 4-amino-4-deoxychorismate (ADC), a precursor of p-aminobenzoate (PABA) and tetrahydrofolate. In the first step, a glutamine amidotransferase (PabA) generates ammonia as a substrate that, along with chorismate, is used in the second step, catalyzed by aminodeoxychorismate synthase (PabB) to produce ADC. In Lactococcus lactis subsp. lactis (Streptococcus lactis), this protein is Aminodeoxychorismate synthase component 1 (pabB).